Here is a 277-residue protein sequence, read N- to C-terminus: MSEEGGVEVKLLKPRKPLPDVGEIVVGTVQEVHDYGAYLILDEYGGVRAFLPWSEIASRAVRNIHAVLKPRQKVVVKVIRVYKKRGQVDVSLKRVMDSEKKRKMMFYKRYLKAATLVELIAEKLGKSVDEAYREVLWKLEDAYGDPMKGLEAAVLQGREALEKAGVPEEWIEPLLETAKTHVRVKTVKITFYLTLRSMAGDGVERVRKVLEAAKSQIESFKDSKVVARIYTVGAPKYRVELQGYNYKTLEKALEKMVEAARKTASKLGVEFSFERED.

The region spanning 22–93 (GEIVVGTVQE…KRGQVDVSLK (72 aa)) is the S1 motif domain.

The protein belongs to the eIF-2-alpha family. Heterotrimer composed of an alpha, a beta and a gamma chain.

EIF-2 functions in the early steps of protein synthesis by forming a ternary complex with GTP and initiator tRNA. In Aeropyrum pernix (strain ATCC 700893 / DSM 11879 / JCM 9820 / NBRC 100138 / K1), this protein is Translation initiation factor 2 subunit alpha (eif2a).